A 427-amino-acid polypeptide reads, in one-letter code: Serine--tRNA ligase (427 aa).

230 to 232 (TAE) is an L-serine binding site. 261 to 263 (RAE) is a binding site for ATP. Position 284 (Glu284) interacts with L-serine. Residue 348–351 (EISS) coordinates ATP. Ser384 is an L-serine binding site.

This sequence belongs to the class-II aminoacyl-tRNA synthetase family. Type-1 seryl-tRNA synthetase subfamily. Homodimer. The tRNA molecule binds across the dimer.

The protein localises to the cytoplasm. It carries out the reaction tRNA(Ser) + L-serine + ATP = L-seryl-tRNA(Ser) + AMP + diphosphate + H(+). The enzyme catalyses tRNA(Sec) + L-serine + ATP = L-seryl-tRNA(Sec) + AMP + diphosphate + H(+). It functions in the pathway aminoacyl-tRNA biosynthesis; selenocysteinyl-tRNA(Sec) biosynthesis; L-seryl-tRNA(Sec) from L-serine and tRNA(Sec): step 1/1. Catalyzes the attachment of serine to tRNA(Ser). Is also able to aminoacylate tRNA(Sec) with serine, to form the misacylated tRNA L-seryl-tRNA(Sec), which will be further converted into selenocysteinyl-tRNA(Sec). This chain is Serine--tRNA ligase, found in Syntrophomonas wolfei subsp. wolfei (strain DSM 2245B / Goettingen).